We begin with the raw amino-acid sequence, 200 residues long: 3-isopropylmalate dehydratase small subunit (200 aa).

It belongs to the LeuD family. LeuD type 1 subfamily. As to quaternary structure, heterodimer of LeuC and LeuD.

The enzyme catalyses (2R,3S)-3-isopropylmalate = (2S)-2-isopropylmalate. The protein operates within amino-acid biosynthesis; L-leucine biosynthesis; L-leucine from 3-methyl-2-oxobutanoate: step 2/4. Functionally, catalyzes the isomerization between 2-isopropylmalate and 3-isopropylmalate, via the formation of 2-isopropylmaleate. This is 3-isopropylmalate dehydratase small subunit from Actinobacillus pleuropneumoniae serotype 5b (strain L20).